The chain runs to 201 residues: Syndecan-2 (201 aa).

The N-terminal stretch at 1-18 (MQRAWILLTLGLMACVSA) is a signal peptide. The Extracellular portion of the chain corresponds to 19-144 (ETRAELTSDK…HSDNLFKRTE (126 aa)). O-linked (Xyl...) (glycosaminoglycan) serine glycans are attached at residues Ser41, Ser55, and Ser57. Disordered stretches follow at residues 42–69 (GLYP…PDLT) and 88–129 (TMTL…KSTD). A compositionally biased stretch (polar residues) spans 90-102 (TLKTQSITPTQTE). Residues 106-123 (ETDKKEFEISEAEEKQDP) are compositionally biased toward basic and acidic residues. Position 115 is a phosphoserine (Ser115). Residues 145–169 (VLAAVIAGGVIGFLFAIFLILLLVY) traverse the membrane as a helical segment. Residues 170-201 (RMRKKDEGSYDLGERKPSSAAYQKAPTKEFYA) are Cytoplasmic-facing. A disordered region spans residues 178 to 201 (SYDLGERKPSSAAYQKAPTKEFYA). At Ser187 the chain carries Phosphoserine.

Belongs to the syndecan proteoglycan family. Interacts (via cytoplasmic domain) with SARM1. Forms a complex with SDCBP and PDCD6IP. O-glycosylated; contains both heparan sulfate and chondroitin sulfate.

It localises to the membrane. Its function is as follows. Cell surface proteoglycan which regulates dendritic arbor morphogenesis. The polypeptide is Syndecan-2 (Sdc2) (Rattus norvegicus (Rat)).